The following is a 344-amino-acid chain: Transmembrane protein 268 (344 aa).

The segment at 1 to 31 (MACEPQMDPGGAAGPLPTSSPGWSPLPGGSP) is disordered. Over residues 14–27 (GPLPTSSPGWSPLP) the composition is skewed to low complexity. 2 helical membrane-spanning segments follow: residues 106–126 (AFAVVFYVVVWANIYSTSQMF) and 133–153 (AGVLLVTLAATSLTLTLVVIF). A disordered region spans residues 244 to 266 (TANEGPENLLEETPLLPDRPGST). Residues 247-259 (EGPENLLEETPLL) are compositionally biased toward low complexity.

Interacts with ITGAM; this interaction inhibits ITGAM degradation via the endosome-lysosome pathway. Interacts with ITGB4; this interaction prevents ITGB4 degradation.

It is found in the cell membrane. In terms of biological role, stabilizes cell surface expression of ITGAM and participates in the adhesion and migration of phagocytes during bacterial clearance. This chain is Transmembrane protein 268 (TMEM268), found in Bos taurus (Bovine).